The primary structure comprises 888 residues: Bifunctional uridylyltransferase/uridylyl-removing enzyme (888 aa).

A uridylyltransferase region spans residues 1–348; sequence MATTTDKQVS…YHFAEDKIEP (348 aa). A uridylyl-removing region spans residues 349–709; sequence INPRFRIINN…LQPTTSRGAT (361 aa). The 123-residue stretch at 468-590 folds into the HD domain; sequence VDEHTILVIR…VGTQQRLDYL (123 aa). ACT domains follow at residues 710 to 787 and 817 to 888; these read ELII…DDTM and ELSI…NIEQ.

The protein belongs to the GlnD family. Requires Mg(2+) as cofactor.

It carries out the reaction [protein-PII]-L-tyrosine + UTP = [protein-PII]-uridylyl-L-tyrosine + diphosphate. The catalysed reaction is [protein-PII]-uridylyl-L-tyrosine + H2O = [protein-PII]-L-tyrosine + UMP + H(+). Uridylyltransferase (UTase) activity is inhibited by glutamine, while glutamine activates uridylyl-removing (UR) activity. Modifies, by uridylylation and deuridylylation, the PII regulatory proteins (GlnB and homologs), in response to the nitrogen status of the cell that GlnD senses through the glutamine level. Under low glutamine levels, catalyzes the conversion of the PII proteins and UTP to PII-UMP and PPi, while under higher glutamine levels, GlnD hydrolyzes PII-UMP to PII and UMP (deuridylylation). Thus, controls uridylylation state and activity of the PII proteins, and plays an important role in the regulation of nitrogen assimilation and metabolism. The sequence is that of Bifunctional uridylyltransferase/uridylyl-removing enzyme from Hydrogenovibrio crunogenus (strain DSM 25203 / XCL-2) (Thiomicrospira crunogena).